Consider the following 195-residue polypeptide: Probable GTP-binding protein EngB (195 aa).

An EngB-type G domain is found at Gly-22 to Arg-195. Residues Gly-30–Ser-37, Gly-57–Thr-61, Asp-75–Gly-78, Thr-142–Asp-145, and Phe-174–Ser-176 contribute to the GTP site. Positions 37 and 59 each coordinate Mg(2+).

It belongs to the TRAFAC class TrmE-Era-EngA-EngB-Septin-like GTPase superfamily. EngB GTPase family. The cofactor is Mg(2+).

Its function is as follows. Necessary for normal cell division and for the maintenance of normal septation. Binds GTP and GDP. In Bacillus subtilis (strain 168), this protein is Probable GTP-binding protein EngB.